A 157-amino-acid polypeptide reads, in one-letter code: Protein-export protein SecB (157 aa).

The protein belongs to the SecB family. In terms of assembly, homotetramer, a dimer of dimers. One homotetramer interacts with 1 SecA dimer.

It localises to the cytoplasm. One of the proteins required for the normal export of preproteins out of the cell cytoplasm. It is a molecular chaperone that binds to a subset of precursor proteins, maintaining them in a translocation-competent state. It also specifically binds to its receptor SecA. The polypeptide is Protein-export protein SecB (Dichelobacter nodosus (strain VCS1703A)).